A 325-amino-acid polypeptide reads, in one-letter code: NADH-cytochrome b5 reductase 2 (325 aa).

The chain crosses the membrane as a helical span at residues 32-48 (VPLYGGLALAAGGAYYY). The 106-residue stretch at 74–179 (QGWVDLKLAG…KGPIPKYPWE (106 aa)) folds into the FAD-binding FR-type domain. Residue 182-217 (KHDHICMIAGGTGITPMYQIIRKIFNNPNDKTKVTL) participates in FAD binding.

The protein belongs to the flavoprotein pyridine nucleotide cytochrome reductase family. FAD serves as cofactor.

The protein resides in the mitochondrion outer membrane. The enzyme catalyses 2 Fe(III)-[cytochrome b5] + NADH = 2 Fe(II)-[cytochrome b5] + NAD(+) + H(+). Functionally, may mediate the reduction of outer membrane cytochrome b5. This chain is NADH-cytochrome b5 reductase 2 (MCR1), found in Coccidioides immitis (strain RS) (Valley fever fungus).